The chain runs to 1268 residues: Truncated polyprotein 1aTF (1268 aa).

The segment at 8–28 (CMCTPAARVFWNAGQVFCTRC) adopts a C4-type; atypical zinc-finger fold. A Peptidase C31 domain is found at 69-180 (ECTPSGCCWL…QPFCPFEEAH (112 aa)). A PCP1-alpha region spans residues 69-182 (ECTPSGCCWL…FCPFEEAHSD (114 aa)). Active-site for Nsp1-alpha papain-like cysteine proteinase activity residues include Cys76 and His146. The PCP1-beta stretch occupies residues 269–384 (PNVFDGKCWL…IFRFGAHKWY (116 aa)). Positions 269 to 385 (PNVFDGKCWL…FRFGAHKWYG (117 aa)) constitute a Peptidase C32 domain. Active-site for Nsp1-beta papain-like cysteine proteinase activity residues include Cys276 and His345. Positions 420 to 527 (TYSPPTDGSC…VGVCSEGCVA (108 aa)) constitute a Peptidase C33 domain. Active-site for Nsp2 cysteine proteinase activity residues include Cys429 and His498. Disordered stretches follow at residues 728 to 758 (AIGS…SHPA) and 1027 to 1064 (SVTP…SHAS). A compositionally biased stretch (basic and acidic residues) spans 737–749 (DSKRENMHNSRED). 4 helical membrane passes run 1119-1139 (LWLQ…CSVV), 1153-1173 (FLVL…LLLY), 1194-1214 (VMLS…AALW), and 1233-1253 (VISG…FLLF).

It is found in the host nucleus. Its subcellular location is the host cytoplasm. The protein localises to the host endoplasmic reticulum membrane. The protein resides in the membrane. Functionally, is essential for viral subgenomic mRNA synthesis. In terms of biological role, inhibits IFN-beta production. Counteracts the action of NF-kappaB by decreasing the phosphorylation of IkappaB-alpha, such that the degradation of IkappaB-alpha is suppressed. This leads to the blockage of NF-kappaB nuclear translocation and thus interference of NF-kappaB activation. Also seems to inhibit IRF3-dependent pathways. Its function is as follows. Nsp1-beta transactivates the programmed ribosomal frameshifting event leading to the expression of the 1aTF polyprotein. The sequence is that of Truncated polyprotein 1aTF from Porcine reproductive and respiratory syndrome virus (isolate Pig/United States/SD 01-08/2001) (PRRSV).